The sequence spans 70 residues: Large ribosomal subunit protein bL31 (70 aa).

Residues Cys17, Cys19, Cys37, and Cys40 each contribute to the Zn(2+) site.

The protein belongs to the bacterial ribosomal protein bL31 family. Type A subfamily. As to quaternary structure, part of the 50S ribosomal subunit. Requires Zn(2+) as cofactor.

Binds the 23S rRNA. The chain is Large ribosomal subunit protein bL31 from Clostridium kluyveri (strain NBRC 12016).